Reading from the N-terminus, the 406-residue chain is Argininosuccinate synthase (406 aa).

ATP is bound by residues 13 to 21 (AYSGGLDTS) and Ala40. 2 residues coordinate L-citrulline: Tyr91 and Ser96. Position 121 (Gly121) interacts with ATP. L-aspartate-binding residues include Thr123, Asn127, and Asp128. Position 127 (Asn127) interacts with L-citrulline. L-citrulline contacts are provided by Arg131, Ser182, Ser191, Glu267, and Tyr279.

Belongs to the argininosuccinate synthase family. Type 1 subfamily. Homotetramer.

It localises to the cytoplasm. The catalysed reaction is L-citrulline + L-aspartate + ATP = 2-(N(omega)-L-arginino)succinate + AMP + diphosphate + H(+). It participates in amino-acid biosynthesis; L-arginine biosynthesis; L-arginine from L-ornithine and carbamoyl phosphate: step 2/3. The protein is Argininosuccinate synthase of Brucella abortus (strain S19).